The following is a 241-amino-acid chain: Microneme antigen (241 aa).

The N-terminal stretch at 1–34 (MRLPIRFPKYVLYGMASAVWSILFLHILVGDTMS) is a signal peptide. Positions 35 to 103 (AADALSWSGG…ATGRGPSFVH (69 aa)) are excised as a propeptide. Residues 61-83 (HEMGKELEQQHGAEEQQMQRDTK) are compositionally biased toward basic and acidic residues. The interval 61 to 92 (HEMGKELEQQHGAEEQQMQRDTKPAAFSNPPH) is disordered. PAN domains are found at residues 112-181 (CFPH…PRSC) and 185-241 (CTDN…FNKS). Intrachain disulfides connect C112/C181, C137/C159, C141/C147, C185/C189, C210/C230, and C214/C220. An a carbohydrate-binding site is contributed by S121. Residues K162, Y169, and D174 each contribute to the a carbohydrate site.

Belongs to the microneme antigen family. In terms of assembly, homodimer or heterodimer of major microneme antigen and microneme antigen. In terms of processing, contains six disulfide bonds.

It is found in the cytoplasmic vesicle. Its subcellular location is the secretory vesicle. The protein resides in the microneme. Functionally, galactose-binding lectin. Plays a role in adhesion to the host cell. Has a potential role in invasion of host cells. This is Microneme antigen from Sarcocystis muris.